The following is a 336-amino-acid chain: Adenylosuccinate synthetase (336 aa).

GTP contacts are provided by residues 12-18 (GDEGKGK) and 42-44 (GHS). Asp13 functions as the Proton acceptor in the catalytic mechanism. Asp13 and Gly42 together coordinate Mg(2+). IMP contacts are provided by residues 13-16 (DEGK), 40-43 (NAGH), Thr127, Arg141, Gln179, Thr194, and Arg256. His43 (proton donor) is an active-site residue. Position 252 to 258 (252 to 258 (TVTGRRR)) interacts with substrate. GTP-binding positions include Arg258, 284 to 286 (CLD), and 324 to 326 (STG).

This sequence belongs to the adenylosuccinate synthetase family. Homodimer. Requires Mg(2+) as cofactor.

It localises to the cytoplasm. It catalyses the reaction IMP + L-aspartate + GTP = N(6)-(1,2-dicarboxyethyl)-AMP + GDP + phosphate + 2 H(+). It functions in the pathway purine metabolism; AMP biosynthesis via de novo pathway; AMP from IMP: step 1/2. Functionally, plays an important role in the de novo pathway of purine nucleotide biosynthesis. Catalyzes the first committed step in the biosynthesis of AMP from IMP. The chain is Adenylosuccinate synthetase from Methanococcus aeolicus (strain ATCC BAA-1280 / DSM 17508 / OCM 812 / Nankai-3).